A 51-amino-acid polypeptide reads, in one-letter code: Putative ribosomal protein eL39-like 5 (51 aa).

Belongs to the eukaryotic ribosomal protein eL39 family.

The sequence is that of Putative ribosomal protein eL39-like 5 (RPL39P5) from Homo sapiens (Human).